The chain runs to 384 residues: Large ribosomal subunit protein uL3m (384 aa).

Disordered stretches follow at residues 80–101 (NQVT…KRRE) and 237–262 (QEAS…SGSR). The segment covering 240–249 (SHGNSLNHRT) has biased composition (polar residues).

This sequence belongs to the universal ribosomal protein uL3 family. As to quaternary structure, component of the mitochondrial large ribosomal subunit (mt-LSU). Mature N.crassa 74S mitochondrial ribosomes consist of a small (37S) and a large (54S) subunit. The 37S small subunit contains a 16S ribosomal RNA (16S mt-rRNA) and 32 different proteins. The 54S large subunit contains a 23S rRNA (23S mt-rRNA) and 42 different proteins.

It is found in the mitochondrion. Component of the mitochondrial ribosome (mitoribosome), a dedicated translation machinery responsible for the synthesis of mitochondrial genome-encoded proteins, including at least some of the essential transmembrane subunits of the mitochondrial respiratory chain. The mitoribosomes are attached to the mitochondrial inner membrane and translation products are cotranslationally integrated into the membrane. This chain is Large ribosomal subunit protein uL3m (mrpl9), found in Neurospora crassa (strain ATCC 24698 / 74-OR23-1A / CBS 708.71 / DSM 1257 / FGSC 987).